Consider the following 380-residue polypeptide: Ribosomal RNA large subunit methyltransferase G (380 aa).

This sequence belongs to the methyltransferase superfamily. RlmG family.

It localises to the cytoplasm. It carries out the reaction guanosine(1835) in 23S rRNA + S-adenosyl-L-methionine = N(2)-methylguanosine(1835) in 23S rRNA + S-adenosyl-L-homocysteine + H(+). Its function is as follows. Specifically methylates the guanine in position 1835 (m2G1835) of 23S rRNA. This is Ribosomal RNA large subunit methyltransferase G from Aeromonas hydrophila subsp. hydrophila (strain ATCC 7966 / DSM 30187 / BCRC 13018 / CCUG 14551 / JCM 1027 / KCTC 2358 / NCIMB 9240 / NCTC 8049).